We begin with the raw amino-acid sequence, 163 residues long: ATP synthase subunit b, sodium ion specific (163 aa).

A helical transmembrane segment spans residues 9 to 29 (VSIDINMFWQIINFLILMFFF).

It belongs to the ATPase B chain family. In terms of assembly, F-type ATPases have 2 components, F(1) - the catalytic core - and F(0) - the membrane proton channel. F(1) has five subunits: alpha(3), beta(3), gamma(1), delta(1), epsilon(1). F(0) has three main subunits: a(1), b(2) and c(10-14). The alpha and beta chains form an alternating ring which encloses part of the gamma chain. F(1) is attached to F(0) by a central stalk formed by the gamma and epsilon chains, while a peripheral stalk is formed by the delta and b chains.

Its subcellular location is the cell inner membrane. Functionally, f(1)F(0) ATP synthase produces ATP from ADP in the presence of a proton or sodium gradient. F-type ATPases consist of two structural domains, F(1) containing the extramembraneous catalytic core and F(0) containing the membrane proton channel, linked together by a central stalk and a peripheral stalk. During catalysis, ATP synthesis in the catalytic domain of F(1) is coupled via a rotary mechanism of the central stalk subunits to proton translocation. In terms of biological role, component of the F(0) channel, it forms part of the peripheral stalk, linking F(1) to F(0). The sequence is that of ATP synthase subunit b, sodium ion specific (atpF) from Ilyobacter tartaricus.